Reading from the N-terminus, the 303-residue chain is Pantothenate synthetase (303 aa).

Residues 1–21 (MIATGHGGAERRTTAGDGTAR) form a disordered region. 48-55 (MGALHDGH) is an ATP binding site. Residue His55 is the Proton donor of the active site. (R)-pantoate is bound at residue Gln79. Gln79 lines the beta-alanine pocket. An ATP-binding site is contributed by 165–168 (GRKD). Gln171 serves as a coordination point for (R)-pantoate. 202–205 (ASSR) contacts ATP.

Belongs to the pantothenate synthetase family. As to quaternary structure, homodimer.

It localises to the cytoplasm. The catalysed reaction is (R)-pantoate + beta-alanine + ATP = (R)-pantothenate + AMP + diphosphate + H(+). It functions in the pathway cofactor biosynthesis; (R)-pantothenate biosynthesis; (R)-pantothenate from (R)-pantoate and beta-alanine: step 1/1. Functionally, catalyzes the condensation of pantoate with beta-alanine in an ATP-dependent reaction via a pantoyl-adenylate intermediate. The sequence is that of Pantothenate synthetase from Acidothermus cellulolyticus (strain ATCC 43068 / DSM 8971 / 11B).